Here is a 486-residue protein sequence, read N- to C-terminus: Protein nucleotidyltransferase YdiU (486 aa).

Positions 90, 92, 93, 113, 125, 126, 176, and 183 each coordinate ATP. Residue D252 is the Proton acceptor of the active site. Mg(2+)-binding residues include N253 and D262. D262 is a binding site for ATP.

It belongs to the SELO family. Mg(2+) is required as a cofactor. Requires Mn(2+) as cofactor.

The enzyme catalyses L-seryl-[protein] + ATP = 3-O-(5'-adenylyl)-L-seryl-[protein] + diphosphate. It catalyses the reaction L-threonyl-[protein] + ATP = 3-O-(5'-adenylyl)-L-threonyl-[protein] + diphosphate. It carries out the reaction L-tyrosyl-[protein] + ATP = O-(5'-adenylyl)-L-tyrosyl-[protein] + diphosphate. The catalysed reaction is L-histidyl-[protein] + UTP = N(tele)-(5'-uridylyl)-L-histidyl-[protein] + diphosphate. The enzyme catalyses L-seryl-[protein] + UTP = O-(5'-uridylyl)-L-seryl-[protein] + diphosphate. It catalyses the reaction L-tyrosyl-[protein] + UTP = O-(5'-uridylyl)-L-tyrosyl-[protein] + diphosphate. Its function is as follows. Nucleotidyltransferase involved in the post-translational modification of proteins. It can catalyze the addition of adenosine monophosphate (AMP) or uridine monophosphate (UMP) to a protein, resulting in modifications known as AMPylation and UMPylation. This is Protein nucleotidyltransferase YdiU from Pseudomonas paraeruginosa (strain DSM 24068 / PA7) (Pseudomonas aeruginosa (strain PA7)).